We begin with the raw amino-acid sequence, 105 residues long: BLOC-1-related complex subunit 7 (105 aa).

It belongs to the BORCS7 family. Component of the BLOC-one-related complex (BORC) which is composed of BLOC1S1, BLOC1S2, BORCS5, BORCS6, BORCS7, BORCS8, KXD1 and SNAPIN.

Its subcellular location is the lysosome membrane. As part of the BORC complex may play a role in lysosomes movement and localization at the cell periphery. Associated with the cytosolic face of lysosomes, the BORC complex may recruit ARL8B and couple lysosomes to microtubule plus-end-directed kinesin motor. The chain is BLOC-1-related complex subunit 7 from Mus musculus (Mouse).